The following is a 273-amino-acid chain: MLTKRIIPCLDVTLDRAGGCVVKGVEFVDLKEAGDPVELAKRYNEDGADELVFLDITASAHGRETMIDVIERTADEVFIPLTVGGGISSIEAIRQILRAGADKVSVNTSAVKNPEFIKESSDIFGAQCIVTAIDCKRNTNVKDNPDKTILELEDGTPAWYEVVIYGGRKNTGIDAVQWAKRAEELGSGEILLTSMDRDGTCAGYDIPITRKLSEELDIPIIASGGVGNPQHIYEGFSDGKADAALAASIFHFGEYSIQEVKEFLKERKIPVRL.

Active-site residues include aspartate 11 and aspartate 134.

The protein belongs to the HisA/HisF family. Heterodimer of HisH and HisF.

It is found in the cytoplasm. It carries out the reaction 5-[(5-phospho-1-deoxy-D-ribulos-1-ylimino)methylamino]-1-(5-phospho-beta-D-ribosyl)imidazole-4-carboxamide + L-glutamine = D-erythro-1-(imidazol-4-yl)glycerol 3-phosphate + 5-amino-1-(5-phospho-beta-D-ribosyl)imidazole-4-carboxamide + L-glutamate + H(+). The protein operates within amino-acid biosynthesis; L-histidine biosynthesis; L-histidine from 5-phospho-alpha-D-ribose 1-diphosphate: step 5/9. Functionally, IGPS catalyzes the conversion of PRFAR and glutamine to IGP, AICAR and glutamate. The HisF subunit catalyzes the cyclization activity that produces IGP and AICAR from PRFAR using the ammonia provided by the HisH subunit. The chain is Imidazole glycerol phosphate synthase subunit HisF from Methanosarcina mazei (strain ATCC BAA-159 / DSM 3647 / Goe1 / Go1 / JCM 11833 / OCM 88) (Methanosarcina frisia).